The primary structure comprises 89 residues: Co-chaperonin GroES (89 aa).

The protein belongs to the GroES chaperonin family. In terms of assembly, heptamer of 7 subunits arranged in a ring. Interacts with the chaperonin GroEL.

The protein localises to the cytoplasm. In terms of biological role, together with the chaperonin GroEL, plays an essential role in assisting protein folding. The GroEL-GroES system forms a nano-cage that allows encapsulation of the non-native substrate proteins and provides a physical environment optimized to promote and accelerate protein folding. GroES binds to the apical surface of the GroEL ring, thereby capping the opening of the GroEL channel. The protein is Co-chaperonin GroES of Parabacteroides distasonis (strain ATCC 8503 / DSM 20701 / CIP 104284 / JCM 5825 / NCTC 11152).